Reading from the N-terminus, the 682-residue chain is Connectin (682 aa).

Residues 1–24 form the signal peptide; the sequence is MATLADSAICFLLLSLLLIGACLV. Residues 29–54 are disordered; the sequence is GRAKDDRRTRGRGSSSGVLSSSSSSS. Positions 40 to 54 are enriched in low complexity; the sequence is RGSSSGVLSSSSSSS. LRR repeat units lie at residues 149 to 172, 173 to 196, 199 to 220, 223 to 244, 247 to 268, 271 to 292, 295 to 316, 319 to 342, 343 to 364, 367 to 388, and 389 to 404; these read LREL…IIEP, LKNL…AFAN, FLER…AFAN, RLRE…AFRN, LCER…LFAD, RLTF…IFRG, NLNV…VFAE, SLSE…DGLN, TLKT…LLRG, ALLS…TFQP, and IMDN…LVSD. One can recognise an LRRCT domain in the interval 405–462; the sequence is NKFICDCRLQWIFELKNRTRHLQLRDSLEDLHCTLQEPKLSHFVDPVPPTILDVLNIG. The segment at 503–536 is disordered; that stretch reads RQALRGQRQFASSAENVVESKMRRRRKRQEEVKE. A658 carries GPI-anchor amidated alanine lipidation. The propeptide at 659–682 is removed in mature form; sequence GANSLAQGMTIIVSLVALMMISRG.

Predominantly expressed in abdominal and thoracic segment muscle and motorneuron cells.

Its subcellular location is the cell membrane. Its function is as follows. Cell adhesion protein involved in target recognition during neuromuscular development. Mediates homophilic cellular adhesion. This is Connectin (Con) from Drosophila melanogaster (Fruit fly).